The following is a 212-amino-acid chain: Large ribosomal subunit protein uL3 (212 aa).

The interval 136 to 155 (THGNSLSHRSNGSIGQNQTP) is disordered. The residue at position 153 (Q153) is an N5-methylglutamine.

Belongs to the universal ribosomal protein uL3 family. Part of the 50S ribosomal subunit. Forms a cluster with proteins L14 and L19. In terms of processing, methylated by PrmB.

Its function is as follows. One of the primary rRNA binding proteins, it binds directly near the 3'-end of the 23S rRNA, where it nucleates assembly of the 50S subunit. This is Large ribosomal subunit protein uL3 from Shewanella baltica (strain OS223).